A 132-amino-acid polypeptide reads, in one-letter code: Small ribosomal subunit protein uS8 (132 aa).

It belongs to the universal ribosomal protein uS8 family. In terms of assembly, part of the 30S ribosomal subunit. Contacts proteins S5 and S12.

In terms of biological role, one of the primary rRNA binding proteins, it binds directly to 16S rRNA central domain where it helps coordinate assembly of the platform of the 30S subunit. The polypeptide is Small ribosomal subunit protein uS8 (Paracoccus denitrificans (strain Pd 1222)).